Consider the following 175-residue polypeptide: uncharacterized protein (175 aa).

2 disordered regions span residues 68 to 111 (NKSN…DDDQ) and 154 to 175 (PERA…KLTT). A compositionally biased stretch (low complexity) spans 95–106 (EEQPMMPYQQPP).

It belongs to the asfivirus H171R family.

It localises to the virion. This is an uncharacterized protein from African swine fever virus (isolate Pig/Kenya/KEN-50/1950) (ASFV).